Consider the following 76-residue polypeptide: Adropin (76 aa).

Positions 1 to 33 are cleaved as a signal peptide; sequence MGAALSQGALIAIICNGLVGFLLLLLWVILCWA. Positions 41–76 are disordered; that stretch reads IDSLSESSPNSSPGPCPEKAPPPQKPSHEGSYLLQP. Positions 52 to 65 are enriched in pro residues; that stretch reads SPGPCPEKAPPPQK.

The protein resides in the secreted. Involved in the regulation of glucose homeostasis and lipid metabolism. This chain is Adropin (ENHO), found in Bos taurus (Bovine).